A 104-amino-acid chain; its full sequence is Pterin-4-alpha-carbinolamine dehydratase (104 aa).

Ala2 carries the N-acetylalanine modification. Substrate is bound by residues 61-63 (DHH) and 78-81 (STHD).

It belongs to the pterin-4-alpha-carbinolamine dehydratase family. In terms of assembly, homotetramer and homodimer.

Its subcellular location is the cytoplasm. It is found in the nucleus. The catalysed reaction is (4aS,6R)-4a-hydroxy-L-erythro-5,6,7,8-tetrahydrobiopterin = (6R)-L-erythro-6,7-dihydrobiopterin + H2O. Functionally, involved in tetrahydrobiopterin biosynthesis. Seems to both prevent the formation of 7-pterins and accelerate the formation of quinonoid-BH2. Coactivator for HNF1A-dependent transcription. Regulates the dimerization of homeodomain protein HNF1A and enhances its transcriptional activity. Also acts as a coactivator for HNF1B-dependent transcription. This chain is Pterin-4-alpha-carbinolamine dehydratase (pcbd), found in Xenopus laevis (African clawed frog).